A 395-amino-acid chain; its full sequence is Putative ankyrin repeat protein RF_0950 (395 aa).

ANK repeat units follow at residues 3 to 32 (YQKELLIEAIQEDNLKEVQKLLQAGVNPNT), 36 to 65 (YGKLCIRSAINNENLDIVKVLLDYGADPNA), 69 to 98 (IKDPIILEAIRSRELGIINSLLKKGANPNV), 101 to 130 (RHENPIILSALPRGVNIVNTLLNNGADPNQ), 134 to 166 (NGNTALSIILERTGDINVDVTALLIEKVKEKAL), 172 to 201 (NGETCLHLAAQQGKIQMFDKYLDYYQTVNI), and 205 to 234 (AGNTPLYWSKLLGHTEISDMLNKRAEELNE). The Glutamine amidotransferase type-1 domain maps to 272 to 395 (KTKLIYQGGD…YLKVPILKEK (124 aa)). C377 serves as the catalytic Nucleophile.

The chain is Putative ankyrin repeat protein RF_0950 from Rickettsia felis (strain ATCC VR-1525 / URRWXCal2) (Rickettsia azadi).